Here is a 459-residue protein sequence, read N- to C-terminus: Phosphoglucosamine mutase (459 aa).

Ser-112 acts as the Phosphoserine intermediate in catalysis. Mg(2+) is bound by residues Ser-112, Asp-249, Asp-251, and Asp-253. The residue at position 112 (Ser-112) is a Phosphoserine.

Belongs to the phosphohexose mutase family. It depends on Mg(2+) as a cofactor. Post-translationally, activated by phosphorylation.

The catalysed reaction is alpha-D-glucosamine 1-phosphate = D-glucosamine 6-phosphate. Functionally, catalyzes the conversion of glucosamine-6-phosphate to glucosamine-1-phosphate. In Synechococcus sp. (strain RCC307), this protein is Phosphoglucosamine mutase.